Consider the following 359-residue polypeptide: MFDIDGLVSDSLKLLADRVDKNYRISLVIVGPPGSGKSTIANELCERLNSMFHEYLKEHGGNIEISGVSEPLPVDITEPIREVSRNIVEYMTSNDGILPQSVEDLDFECVKFQDDGRDNGNVNGNVKVIGRGGLPNAIEVSPYHDLSKPKEKCDVNIAQIIPMDGFHLTRKCLDNFKDPVNAHRRRGSPSTFDSNNFLQLCKLLAETSNTKIPLSRFQNSDNDDVDAVWEKLAKTFTSDVQDIYIPGFDHSLKDPTSNQYCINGFTRIMIFEGLYLLYDQENWSKIYQVLSGTDALLIWNIDIDEAVIQDRVAKRHLNSGLVNTFEEGIDKFQVNDLLNARSIRQHTLDVKDVVTIHND.

Residue G31–T39 coordinates ATP.

This sequence belongs to the YFH7 family.

ATP-dependent kinase that could be involved in endoplasmic reticulum membrane assembly. The polypeptide is ATP-dependent kinase YFH7 (YFH7) (Vanderwaltozyma polyspora (strain ATCC 22028 / DSM 70294 / BCRC 21397 / CBS 2163 / NBRC 10782 / NRRL Y-8283 / UCD 57-17) (Kluyveromyces polysporus)).